The sequence spans 53 residues: uncharacterized protein (53 aa).

Residues 26 to 46 (CYLLFCFLECFLNLFKKCGVF) traverse the membrane as a helical segment.

Belongs to the plectrovirus ORF11 family.

It localises to the host membrane. This is an uncharacterized protein from Spiroplasma virus SpV1-R8A2 B (SpV1).